Reading from the N-terminus, the 140-residue chain is ATP synthase epsilon chain 1 (140 aa).

It belongs to the ATPase epsilon chain family. F-type ATPases have 2 components, CF(1) - the catalytic core - and CF(0) - the membrane proton channel. CF(1) has five subunits: alpha(3), beta(3), gamma(1), delta(1), epsilon(1). CF(0) has three main subunits: a, b and c.

It is found in the cell inner membrane. Its function is as follows. Produces ATP from ADP in the presence of a proton gradient across the membrane. This is ATP synthase epsilon chain 1 from Photobacterium profundum (strain SS9).